Here is a 170-residue protein sequence, read N- to C-terminus: Myelin-associated oligodendrocyte basic protein (170 aa).

The interval 69-170 is disordered; the sequence is SRRATSPQRP…GSPTRAPRFW (102 aa). Over residues 82–92 the composition is skewed to low complexity; the sequence is PAASPVVVRAP. Phosphoserine occurs at positions 85, 98, and 107. 2 repeat units span residues 93–101 and 105–110. The tract at residues 93 to 115 is 3 X 9 AA approximate tandem repeats; sequence PAKPKSPLMPAKPRSPPRPAKPR. Residues 111–115 form a 3; half-length repeat; that stretch reads PAKPR. Over residues 118-130 the composition is skewed to basic and acidic residues; it reads SRTERQPRPRPEV. A compositionally biased stretch (low complexity) spans 138-151; it reads KPPQKSKQPARSSP.

It is found in the cytoplasm. The protein localises to the perinuclear region. May play a role in compacting or stabilizing the myelin sheath possibly by binding the negatively charged acidic phospholipids of the cytoplasmic membrane. The chain is Myelin-associated oligodendrocyte basic protein (Mobp) from Mus musculus (Mouse).